A 426-amino-acid polypeptide reads, in one-letter code: Glutamate-1-semialdehyde 2,1-aminomutase (426 aa).

Lysine 264 is subject to N6-(pyridoxal phosphate)lysine.

This sequence belongs to the class-III pyridoxal-phosphate-dependent aminotransferase family. HemL subfamily. Pyridoxal 5'-phosphate serves as cofactor.

The protein localises to the cytoplasm. It catalyses the reaction (S)-4-amino-5-oxopentanoate = 5-aminolevulinate. It functions in the pathway porphyrin-containing compound metabolism; protoporphyrin-IX biosynthesis; 5-aminolevulinate from L-glutamyl-tRNA(Glu): step 2/2. In Methanocella arvoryzae (strain DSM 22066 / NBRC 105507 / MRE50), this protein is Glutamate-1-semialdehyde 2,1-aminomutase.